The chain runs to 420 residues: 3-isopropylmalate dehydratase large subunit (420 aa).

Positions 300, 360, and 363 each coordinate [4Fe-4S] cluster.

Belongs to the aconitase/IPM isomerase family. LeuC type 2 subfamily. In terms of assembly, heterodimer of LeuC and LeuD. Requires [4Fe-4S] cluster as cofactor.

It catalyses the reaction (2R,3S)-3-isopropylmalate = (2S)-2-isopropylmalate. Its pathway is amino-acid biosynthesis; L-leucine biosynthesis; L-leucine from 3-methyl-2-oxobutanoate: step 2/4. Catalyzes the isomerization between 2-isopropylmalate and 3-isopropylmalate, via the formation of 2-isopropylmaleate. This is 3-isopropylmalate dehydratase large subunit from Halothermothrix orenii (strain H 168 / OCM 544 / DSM 9562).